A 354-amino-acid chain; its full sequence is Methionine import ATP-binding protein MetN (354 aa).

An ABC transporter domain is found at 8-250 (LDHIDITFRQ…PKEALTQKFI (243 aa)). 42–49 (GYSGAGKS) lines the ATP pocket.

This sequence belongs to the ABC transporter superfamily. Methionine importer (TC 3.A.1.24) family. In terms of assembly, the complex is composed of two ATP-binding proteins (MetN), two transmembrane proteins (MetI) and a solute-binding protein (MetQ).

Its subcellular location is the cell membrane. It catalyses the reaction L-methionine(out) + ATP + H2O = L-methionine(in) + ADP + phosphate + H(+). The enzyme catalyses D-methionine(out) + ATP + H2O = D-methionine(in) + ADP + phosphate + H(+). In terms of biological role, part of the ABC transporter complex MetNIQ involved in methionine import. Responsible for energy coupling to the transport system. The chain is Methionine import ATP-binding protein MetN from Streptococcus pyogenes serotype M18 (strain MGAS8232).